Consider the following 309-residue polypeptide: Ribonuclease Z (309 aa).

Residues His-63, His-65, Asp-67, His-68, His-145, Asp-216, and His-274 each coordinate Zn(2+). The active-site Proton acceptor is Asp-67.

Belongs to the RNase Z family. In terms of assembly, homodimer. It depends on Zn(2+) as a cofactor.

It carries out the reaction Endonucleolytic cleavage of RNA, removing extra 3' nucleotides from tRNA precursor, generating 3' termini of tRNAs. A 3'-hydroxy group is left at the tRNA terminus and a 5'-phosphoryl group is left at the trailer molecule.. In terms of biological role, zinc phosphodiesterase, which displays some tRNA 3'-processing endonuclease activity. Probably involved in tRNA maturation, by removing a 3'-trailer from precursor tRNA. The polypeptide is Ribonuclease Z (Streptococcus gordonii (strain Challis / ATCC 35105 / BCRC 15272 / CH1 / DL1 / V288)).